A 434-amino-acid chain; its full sequence is Tryptophan dimethylallyltransferase nptA (434 aa).

Residues 91 to 92 and Glu-100 each bind L-tryptophan; that span reads SL. Positions 115, 202, and 204 each coordinate substrate. Tyr-206 is an L-tryptophan binding site. Substrate is bound by residues Arg-271, Lys-273, Tyr-275, Tyr-358, Tyr-423, and Tyr-427.

It belongs to the tryptophan dimethylallyltransferase family. Homodimer.

It carries out the reaction L-tryptophan + dimethylallyl diphosphate = 4-(3-methylbut-2-enyl)-L-tryptophan + diphosphate. It participates in secondary metabolite biosynthesis. Its function is as follows. Nonribosomal peptide synthase involved in the synthesis of nidulanin A and derived compounds. Nidulanin A is a tetracyclopeptide with the sequence L-Phe-L-Kyn-L-Val-D-Val and an isoprene unit N-linked to the amino group of L-kynurenine. The NRPS nlsA is responsible of the synthesis of the cyclopeptide and the prenyltransferase nptA adds the isoprene unit on the L-kynurenine residue of nidulanin A. Further modifications lead to additional oxygenated related compounds. This Emericella nidulans (strain FGSC A4 / ATCC 38163 / CBS 112.46 / NRRL 194 / M139) (Aspergillus nidulans) protein is Tryptophan dimethylallyltransferase nptA.